The chain runs to 161 residues: Nucleotide-binding protein Sama_2557 (161 aa).

It belongs to the YajQ family.

Nucleotide-binding protein. This chain is Nucleotide-binding protein Sama_2557, found in Shewanella amazonensis (strain ATCC BAA-1098 / SB2B).